Reading from the N-terminus, the 417-residue chain is Probable histone-binding protein lin-53 (417 aa).

WD repeat units lie at residues 118-158 (NHEG…AVPR), 170-210 (GHTK…NVAG), 220-260 (GHES…PGHC), 263-303 (AHSA…MKLH), 307-347 (SHRD…EDQS), and 364-404 (GHTA…YNEV).

This sequence belongs to the WD repeat RBAP46/RBAP48/MSI1 family. Binds directly to helix 1 of the histone fold of histone H4, a region that is not accessible when H4 is in chromatin. Probable component of a NuRD-like complex, composed of at least lin-53 and hda-1. Interacts with lin-35. Interacts with hda-1; the interaction is direct. Component of the DRM complex, at least composed of lin-9, lin-35, lin-37, lin-52, lin-53, lin-54- dpl-1 and efl-1. Interacts with hcp-3.

Its subcellular location is the nucleus. It is found in the chromosome. It localises to the centromere. Core histone-binding subunit that may target chromatin assembly factors, chromatin remodeling factors and histone deacetylases to their histone substrates in a manner that is regulated by nucleosomal DNA. Required for hcp-3 and his-1 stabilization, localization of hcp-3 to centromeres and for proper chromosome segregation. Synthetic multivulva class B (synMuvB) protein. SynMuvB proteins are required to repress the induction of vulval development by Ras signaling and probably act by forming the multiprotein DRM complex that represses transcription. The polypeptide is Probable histone-binding protein lin-53 (Caenorhabditis elegans).